The primary structure comprises 227 residues: uncharacterized protein (227 aa).

This sequence to ORF5 in pFZ1.

This is an uncharacterized protein from Methanothermobacter thermautotrophicus (Methanobacterium thermoformicicum).